Consider the following 255-residue polypeptide: Leucyl/phenylalanyl-tRNA--protein transferase (255 aa).

The protein belongs to the L/F-transferase family.

It is found in the cytoplasm. The enzyme catalyses N-terminal L-lysyl-[protein] + L-leucyl-tRNA(Leu) = N-terminal L-leucyl-L-lysyl-[protein] + tRNA(Leu) + H(+). It catalyses the reaction N-terminal L-arginyl-[protein] + L-leucyl-tRNA(Leu) = N-terminal L-leucyl-L-arginyl-[protein] + tRNA(Leu) + H(+). It carries out the reaction L-phenylalanyl-tRNA(Phe) + an N-terminal L-alpha-aminoacyl-[protein] = an N-terminal L-phenylalanyl-L-alpha-aminoacyl-[protein] + tRNA(Phe). In terms of biological role, functions in the N-end rule pathway of protein degradation where it conjugates Leu, Phe and, less efficiently, Met from aminoacyl-tRNAs to the N-termini of proteins containing an N-terminal arginine or lysine. This Burkholderia pseudomallei (strain 668) protein is Leucyl/phenylalanyl-tRNA--protein transferase.